Here is a 996-residue protein sequence, read N- to C-terminus: Poly [ADP-ribose] polymerase (996 aa).

A DNA-binding region spans residues 1–369; the sequence is MEIDLPFKVE…TSTILKNISL (369 aa). PARP-type zinc fingers lie at residues 7–89 and 114–203; these read FKVE…DNCT and FGIE…PVIK. Zn(2+) is bound by residues Cys19, Cys22, His51, Cys54, Cys126, Cys129, His161, and Cys164. 2 consecutive short sequence motifs (nuclear localization signal) follow at residues 211–214 and 232–235; these read KKAK and KIKK. Residues 220–358 form the PADR1 zinc-binding domain; the sequence is EEDAASIKEL…EVRAIRYIPP (139 aa). Residues 286 to 329 form a zinc ribbon region; sequence GALLPCTDCKGRQLLFHKSGYLCNGDLTEWTKCTKLLKEPERKS. 4 residues coordinate Zn(2+): Cys291, Cys294, Cys308, and Cys318. Positions 370–507 are automodification domain; sequence KKGDELDGPK…SIYTKSVPKS (138 aa). The 92-residue stretch at 382–473 folds into the BRCT domain; sequence RERPPLYNIE…AGAINYISSM (92 aa). Residues 527 to 625 enclose the WGR domain; sequence VAHVYVSRNK…ENFVKVAGRM (99 aa). Residues 647-764 enclose the PARP alpha-helical domain; sequence KSKLPLSVQD…EIECAYSLLQ (118 aa). The region spanning 773 to 996 is the PARP catalytic domain; that stretch reads NPIDKHYEQL…YMLRMNFKYK (224 aa).

The protein belongs to the ARTD/PARP family.

Its subcellular location is the nucleus. It carries out the reaction NAD(+) + (ADP-D-ribosyl)n-acceptor = nicotinamide + (ADP-D-ribosyl)n+1-acceptor + H(+).. The catalysed reaction is L-aspartyl-[protein] + NAD(+) = 4-O-(ADP-D-ribosyl)-L-aspartyl-[protein] + nicotinamide. The enzyme catalyses L-glutamyl-[protein] + NAD(+) = 5-O-(ADP-D-ribosyl)-L-glutamyl-[protein] + nicotinamide. Poly-ADP-ribosyltransferase that mediates poly-ADP-ribosylation of proteins and plays a key role in DNA repair. Mainly mediates glutamate and aspartate ADP-ribosylation of target proteins: the ADP-D-ribosyl group of NAD(+) is transferred to the acceptor carboxyl group of glutamate and aspartate residues and further ADP-ribosyl groups are transferred to the 2'-position of the terminal adenosine moiety, building up a polymer with an average chain length of 20-30 units. The protein is Poly [ADP-ribose] polymerase of Sarcophaga peregrina (Flesh fly).